We begin with the raw amino-acid sequence, 141 residues long: Photosystem II protein PSBR, chloroplastic (141 aa).

The N-terminal 27 residues, 1-27, are a transit peptide targeting the chloroplast; the sequence is MATMQISAKGLAPLRPRVSSRRVVKPV. A phosphothreonine mark is found at Thr-34 and Thr-37. Residue Ser-43 is modified to Phosphoserine. Residues 114–134 traverse the membrane as a helical segment; it reads GLIAWAGLVLVLLAVGVNLII.

The protein belongs to the psbR family.

It localises to the plastid. The protein localises to the chloroplast thylakoid membrane. In terms of biological role, associated with the oxygen-evolving complex of photosystem II (PSII). Is required for the stable binding of LHCSR3 to PSII-LHCII supercomplexes and is essential for efficient energy-dependent quenching and the integrity of the PSII-LHCII-LHCSR3 supercomplex under continuous high light. The chain is Photosystem II protein PSBR, chloroplastic from Chlamydomonas reinhardtii (Chlamydomonas smithii).